The chain runs to 260 residues: Transforming acid coiled-coil-containing protein 1 (260 aa).

The interval 1-43 (MSLNTTFTKEDGTEVVIPFNGSQNGHPENEEPEVEEAAEPSSS) is disordered. A coiled-coil region spans residues 108-249 (ASSEELEKAL…CDQLLNDVDV (142 aa)).

This sequence belongs to the TACC family. As to quaternary structure, interacts with zyg-9 to form a heterodimer. Interacts with zyg-8 to form a heterodimer. Interacts with efa-6 (via N-terminus). Expressed in touch neurons.

It localises to the cytoplasm. Its subcellular location is the cytoskeleton. It is found in the spindle pole. The protein resides in the microtubule organizing center. The protein localises to the centrosome. It localises to the chromosome. Its subcellular location is the centromere. It is found in the kinetochore. The protein resides in the cell projection. The protein localises to the axon. It localises to the perikaryon. Involved in microtubule formation, polymerization and assembly, regulating microtubule nucleation and length. Plays a role in pronuclear migration and mitotic and meiotic spindle elongation during early embryogenesis. In complex with zyg-9, functions during the early stages of embryonic development to regulate microtubule assembly throughout the cell cycle. Specifically, the complex is required for the formation and growth of astral microtubules and spindle microtubules during mitotic spindle assembly. At anaphase, the complex is required for mitotic spindle positioning in one-cell stage embryos. The complex acts in a partially redundant manner with the tac-1/zyg-8 complex to regulate microtubule assembly and processes during interphase, mitosis and meiosis in embryos. Plays a role in injury-induced axonal regrowth, regeneration and microtubule stability in PLM neurons and this may be downstream of efa-6. This is Transforming acid coiled-coil-containing protein 1 from Caenorhabditis elegans.